The following is a 557-amino-acid chain: Probable asparagine synthetase [glutamine-hydrolyzing] (557 aa).

C2 acts as the For GATase activity in catalysis. The 187-residue stretch at 2–188 (CGILAVHHVA…PGHYYDSETK (187 aa)) folds into the Glutamine amidotransferase type-2 domain. L-glutamine contacts are provided by residues 50–54 (RLAIV), 75–77 (NGE), and D99. Residues 196-531 (PSWWDENKIP…PRQCADTVMR (336 aa)) form the Asparagine synthetase domain. Residues L235, I280, and 354–355 (SG) each bind ATP. Phosphoserine is present on residues S391 and S489.

The protein resides in the cytoplasm. Its subcellular location is the nucleus. It catalyses the reaction L-aspartate + L-glutamine + ATP + H2O = L-asparagine + L-glutamate + AMP + diphosphate + H(+). The protein operates within amino-acid biosynthesis; L-asparagine biosynthesis; L-asparagine from L-aspartate (L-Gln route): step 1/1. The polypeptide is Probable asparagine synthetase [glutamine-hydrolyzing] (asn1) (Schizosaccharomyces pombe (strain 972 / ATCC 24843) (Fission yeast)).